The following is a 412-amino-acid chain: Maintenance of mitochondrial morphology protein 1 (412 aa).

Residues 1–81 lie on the Lumenal side of the membrane; the sequence is MTKELIKTEA…PANNWTFTQG (81 aa). Residues 82 to 102 traverse the membrane as a helical segment; the sequence is LVLGQISVIFIIIVFVKFFVF. The Cytoplasmic segment spans residues 103–412; it reads ADSSTIPTKK…RSDSGTSENL (310 aa). Residues 165–382 form the SMP-LTD domain; that stretch reads SPESLDWFNV…EPRFQVVRLP (218 aa). The segment at 389–412 is disordered; it reads KNTREPINKKTSVSRSDSGTSENL. Over residues 397–412 the composition is skewed to polar residues; the sequence is KKTSVSRSDSGTSENL.

This sequence belongs to the MMM1 family. As to quaternary structure, homodimer. Component of the ER-mitochondria encounter structure (ERMES) or MDM complex, composed of MMM1, MDM10, MDM12 and MDM34. An MMM1 homodimer associates with one molecule of MDM12 on each side in a pairwise head-to-tail manner, and the SMP-LTD domains of MMM1 and MDM12 generate a continuous hydrophobic tunnel for phospholipid trafficking.

It is found in the endoplasmic reticulum membrane. In terms of biological role, component of the ERMES/MDM complex, which serves as a molecular tether to connect the endoplasmic reticulum (ER) and mitochondria. Components of this complex are involved in the control of mitochondrial shape and protein biogenesis, and function in nonvesicular lipid trafficking between the ER and mitochondria. The MDM12-MMM1 subcomplex functions in the major beta-barrel assembly pathway that is responsible for biogenesis of all outer membrane beta-barrel proteins, and acts in a late step after the SAM complex. The MDM10-MDM12-MMM1 subcomplex further acts in the TOM40-specific pathway after the action of the MDM12-MMM1 complex. Essential for establishing and maintaining the structure of mitochondria and maintenance of mtDNA nucleoids. The protein is Maintenance of mitochondrial morphology protein 1 of Candida tropicalis (strain ATCC MYA-3404 / T1) (Yeast).